We begin with the raw amino-acid sequence, 222 residues long: UPF0758 protein Cag_1513 (222 aa).

Residues 100-222 form the MPN domain; sequence KIMAAGDVFE…WYSFRERGLL (123 aa). Residues His171, His173, and Asp184 each contribute to the Zn(2+) site. The JAMM motif signature appears at 171–184; sequence HNHPSGDVNPSNAD.

The protein belongs to the UPF0758 family.

The sequence is that of UPF0758 protein Cag_1513 from Chlorobium chlorochromatii (strain CaD3).